Here is a 375-residue protein sequence, read N- to C-terminus: ATP-dependent kinase YFH7 (375 aa).

Position 66-74 (66-74 (GPPGSGKST)) interacts with ATP.

It belongs to the YFH7 family.

Functionally, ATP-dependent kinase that could be involved in endoplasmic reticulum membrane assembly. This chain is ATP-dependent kinase YFH7 (YFH7), found in Zygosaccharomyces rouxii (strain ATCC 2623 / CBS 732 / NBRC 1130 / NCYC 568 / NRRL Y-229).